The chain runs to 956 residues: Probable hypoxanthine oxidase XdhD (956 aa).

Residues glutamine 414, phenylalanine 445, and alanine 727 each coordinate Mo-molybdopterin.

This sequence belongs to the xanthine dehydrogenase family. It depends on [2Fe-2S] cluster as a cofactor. Mo-molybdopterin is required as a cofactor.

Its function is as follows. Probably has no xanthine dehydrogenase activity; however deletion results in increased adenine sensitivity, suggesting that this protein contributes to the conversion of adenine to guanine nucleotides during purine salvage. The protein is Probable hypoxanthine oxidase XdhD (xdhD) of Escherichia coli O157:H7.